Reading from the N-terminus, the 231-residue chain is Eukaryotic translation initiation factor 4E allele A (231 aa).

Positions 1–20 (MAAAEMERTTSFDAAEKLKA) are enriched in basic and acidic residues. The segment at 1–36 (MAAAEMERTTSFDAAEKLKAADAGGGEVDDELEEGE) is disordered. Over residues 27-36 (EVDDELEEGE) the composition is skewed to acidic residues. EIF4G-binding regions lie at residues 56-59 (HPLE) and 66-102 (FDSP…NNIH). Residues 74-79 (RQTAWG), lysine 106, and 124-125 (WE) contribute to the mRNA site. A disulfide bridge links cysteine 129 with cysteine 167. The EIF4G-binding stretch occupies residues 150-159 (YTLLAMIGHQ). MRNA contacts are provided by residues 174-179 (RSKGEK) and 219-223 (KRLDR).

The protein belongs to the eukaryotic initiation factor 4E family. As to quaternary structure, EIF4F is a multi-subunit complex, the composition of which varies with external and internal environmental conditions. It is composed of at least EIF4A, EIF4E and EIF4G. EIF4E is also known to interact with other partners. In higher plants two isoforms of EIF4F have been identified, named isoform EIF4F and isoform EIF(iso)4F. Isoform EIF4F has subunits p220 and p26, whereas isoform EIF(iso)4F has subunits p82 and p28. (Microbial infection) Interacts with viral genome-linked protein (VPg); this interaction is possible in susceptible hosts but impaired in resistant plants. In terms of processing, according to the redox status, the Cys-129-Cys-167 disulfide bridge may have a role in regulating protein function by affecting its ability to bind capped mRNA.

It is found in the nucleus. The protein resides in the cytoplasm. In terms of biological role, component of the protein complex eIF4F, which is involved in the recognition of the mRNA cap, ATP-dependent unwinding of 5'-terminal secondary structure and recruitment of mRNA to the ribosome. Recognizes and binds the 7-methylguanosine-containing mRNA cap during an early step in the initiation of protein synthesis and facilitates ribosome binding by inducing the unwinding of the mRNAs secondary structures. Key component of recessive resistance to potyviruses. Functionally, (Microbial infection) Susceptibility host factor required for viral infection (e.g. Potato virus Y (PVY)) by recruiting viral RNAs to the host ribosomal complex via an interaction with viral genome-linked protein (VPg). The protein is Eukaryotic translation initiation factor 4E allele A of Solanum tuberosum (Potato).